The following is a 218-amino-acid chain: Adenylate kinase (218 aa).

10 to 15 is a binding site for ATP; the sequence is GAGKGT. The tract at residues 30–59 is NMP; the sequence is STGDMLRAAVKAGTPLGIEAKKVMDAGGLV. AMP contacts are provided by residues T31, R36, 57–59, 85–88, and Q92; these read GLV and GFPR. The tract at residues 122–159 is LID; the sequence is GRRSHAASGRTYHVKFNPPKVAGVDDVTGEPLIQRDDD. ATP contacts are provided by residues R123 and 132 to 133; that span reads TY. 2 residues coordinate AMP: R156 and R167. Residue G203 coordinates ATP.

This sequence belongs to the adenylate kinase family. In terms of assembly, monomer.

It is found in the cytoplasm. The enzyme catalyses AMP + ATP = 2 ADP. It participates in purine metabolism; AMP biosynthesis via salvage pathway; AMP from ADP: step 1/1. Its function is as follows. Catalyzes the reversible transfer of the terminal phosphate group between ATP and AMP. Plays an important role in cellular energy homeostasis and in adenine nucleotide metabolism. The chain is Adenylate kinase from Albidiferax ferrireducens (strain ATCC BAA-621 / DSM 15236 / T118) (Rhodoferax ferrireducens).